The sequence spans 321 residues: 4-dihydromethyl-trisporate dehydrogenase (321 aa).

The Proton donor role is filled by Tyr-51. Residue His-113 coordinates substrate.

The protein belongs to the aldo/keto reductase family.

Its pathway is pheromone biosynthesis; trisporate biosynthesis. Its function is as follows. Catalyzes the NADP-dependent oxidation of (+) mating-type specific precursor 4-dihydromethyl-trisporate to methyl-trisporate. The polypeptide is 4-dihydromethyl-trisporate dehydrogenase (tdh) (Mucor mucedo (Common pinmould)).